Consider the following 263-residue polypeptide: Mediator of RNA polymerase II transcription subunit 6 (263 aa).

The tract at residues 159–205 is disordered; the sequence is NSIHGSSSKPSQSSAVSKPSSTNTGTNATTTPITLTTPSGATVPSTV. Residues 164-200 are compositionally biased toward low complexity; sequence SSSKPSQSSAVSKPSSTNTGTNATTTPITLTTPSGAT.

This sequence belongs to the Mediator complex subunit 6 family. Component of the Mediator complex.

It localises to the nucleus. Functionally, component of the Mediator complex, a coactivator involved in the regulated transcription of nearly all RNA polymerase II-dependent genes. Mediator functions as a bridge to convey information from gene-specific regulatory proteins to the basal RNA polymerase II transcription machinery. Mediator is recruited to promoters by direct interactions with regulatory proteins and serves as a scaffold for the assembly of a functional preinitiation complex with RNA polymerase II and the general transcription factors. The sequence is that of Mediator of RNA polymerase II transcription subunit 6 (MED6) from Candida albicans (strain SC5314 / ATCC MYA-2876) (Yeast).